The sequence spans 124 residues: MDTPDDLYYTDDHEWLRVENGTATVGITDFAQSELGDIVFVELEPEGTKLGQDDIFGTVEAVKTVSELYMPVGGTITAINTELELSPEVVNEDPYGDGWMIEIELAAPDEAEELMGADAYAEVT.

The Lipoyl-binding domain maps to 22–104; sequence TATVGITDFA…YGDGWMIEIE (83 aa). Lysine 63 is subject to N6-lipoyllysine.

Belongs to the GcvH family. The glycine cleavage system is composed of four proteins: P, T, L and H. (R)-lipoate is required as a cofactor.

The glycine cleavage system catalyzes the degradation of glycine. The H protein shuttles the methylamine group of glycine from the P protein to the T protein. This is Glycine cleavage system H protein from Salinibacter ruber (strain DSM 13855 / M31).